We begin with the raw amino-acid sequence, 187 residues long: Ribosome-recycling factor (187 aa).

Belongs to the RRF family.

It is found in the cytoplasm. Its function is as follows. Responsible for the release of ribosomes from messenger RNA at the termination of protein biosynthesis. May increase the efficiency of translation by recycling ribosomes from one round of translation to another. The polypeptide is Ribosome-recycling factor (Methylobacterium radiotolerans (strain ATCC 27329 / DSM 1819 / JCM 2831 / NBRC 15690 / NCIMB 10815 / 0-1)).